The sequence spans 529 residues: Ectonucleoside triphosphate diphosphohydrolase 3 (529 aa).

Residues 1–22 (MFTVMTRQPCEQAGFRALSRTP) are Cytoplasmic-facing. Residues 23 to 43 (AIVTLVVLLVSIVVLVTLTLI) traverse the membrane as a helical segment. The Extracellular portion of the chain corresponds to 44-485 (QIRHPQVLPP…PLIHLPIQPP (442 aa)). Asn-81 carries an N-linked (GlcNAc...) asparagine glycan. Cysteines 92 and 116 form a disulfide. Asn-149 is a glycosylation site (N-linked (GlcNAc...) asparagine). The Proton acceptor role is filled by Glu-182. 222–226 (GASTQ) lines the ATP pocket. 3 N-linked (GlcNAc...) asparagine glycosylation sites follow: Asn-238, Asn-284, and Asn-318. Disulfide bonds link Cys-261/Cys-308, Cys-289/Cys-334, and Cys-347/Cys-353. Asn-381 and Asn-392 each carry an N-linked (GlcNAc...) asparagine glycan. Cys-399 and Cys-422 are joined by a disulfide. The N-linked (GlcNAc...) asparagine glycan is linked to Asn-454. The helical transmembrane segment at 486-506 (VFMGVLAFFTAIALLCLAFLL) threads the bilayer. Over 507–529 (YLCSSFRTKERSENAFDQAVDSD) the chain is Cytoplasmic.

It belongs to the GDA1/CD39 NTPase family. Ca(2+) is required as a cofactor. Requires Mg(2+) as cofactor.

It localises to the cell membrane. It carries out the reaction a ribonucleoside 5'-triphosphate + 2 H2O = a ribonucleoside 5'-phosphate + 2 phosphate + 2 H(+). Catalyzes the hydrolysis of nucleoside triphosphates and diphosphates. Has a threefold preference for the hydrolysis of ATP and UTP over ADP and UDP. In Mus musculus (Mouse), this protein is Ectonucleoside triphosphate diphosphohydrolase 3.